A 240-amino-acid polypeptide reads, in one-letter code: Uridylate kinase (240 aa).

13 to 16 (KASG) is an ATP binding site. The interval 21–26 (GGQGFG) is involved in allosteric activation by GTP. Residue Gly-55 coordinates UMP. 2 residues coordinate ATP: Gly-56 and Arg-60. UMP-binding positions include Asp-75 and 136–143 (TGNPFFTT). Thr-163, Gln-164, Tyr-169, and Asp-172 together coordinate ATP.

Belongs to the UMP kinase family. As to quaternary structure, homohexamer.

The protein localises to the cytoplasm. It carries out the reaction UMP + ATP = UDP + ADP. It participates in pyrimidine metabolism; CTP biosynthesis via de novo pathway; UDP from UMP (UMPK route): step 1/1. Its activity is regulated as follows. Allosterically activated by GTP. Inhibited by UTP. Functionally, catalyzes the reversible phosphorylation of UMP to UDP. The sequence is that of Uridylate kinase from Rhizobium johnstonii (strain DSM 114642 / LMG 32736 / 3841) (Rhizobium leguminosarum bv. viciae).